The chain runs to 521 residues: Riboflavin transporter MCH5 (521 aa).

Disordered stretches follow at residues 1–33 (MSSDSLTPKDTIVPEEQTNQLRQPDLDEDSIHY) and 65–96 (NKGTDIESQPHWGENTSSTHDSDKEEDSNEEI). The Cytoplasmic segment spans residues 1–103 (MSSDSLTPKD…EEIESFPEGG (103 aa)). A helical transmembrane segment spans residues 104 to 124 (FKAWVVTFGCFLGLIACFGLL). An N-linked (GlcNAc...) asparagine glycan is attached at N125. Residues 125-143 (NSTGVIESHLQDNQLSSES) are Extracellular-facing. The helical transmembrane segment at 144 to 164 (VSTIGWLFSLFLFVCSASCII) threads the bilayer. The Cytoplasmic segment spans residues 165-172 (SGTYFDRN). The helical transmembrane segment at 173–193 (GFRTIMIVGTVFHVAGLFATA) threads the bilayer. An N-linked (GlcNAc...) asparagine glycan is attached at N194. Residues 194–200 (NSTKYWH) are Extracellular-facing. Residues 201-221 (FILSFAIVCGFGNGIVLSPLV) traverse the membrane as a helical segment. Over 222-233 (SVPAHYFFKRRG) the chain is Cytoplasmic. Residues 234 to 254 (TALAMATIGGSVGGVVFPIML) traverse the membrane as a helical segment. Topologically, residues 255–269 (RSFFSMKSDTDPTYG) are extracellular. The chain crosses the membrane as a helical span at residues 270-290 (FVWGIRTLGFLDLALLTLSII). Residues 291-325 (LVKERLPHVIENSKDGESRWRYILRVYILQCFDAK) are Cytoplasmic-facing. The chain crosses the membrane as a helical span at residues 326–346 (AFLDMKYLFCVLGTVFSELSI). The Extracellular segment spans residues 347 to 367 (NSALTYYGSYATSHGISANDA). The helical transmembrane segment at 368-388 (YTLIMIINVCGIPGRWVPGYL) threads the bilayer. Topologically, residues 389–396 (SDKFGRFN) are cytoplasmic. The chain crosses the membrane as a helical span at residues 397–417 (VAIATLLTLFIVMFVGWLPFG). The Extracellular portion of the chain corresponds to 418-422 (TNLTN). N419 carries N-linked (GlcNAc...) asparagine glycosylation. The helical transmembrane segment at 423–443 (MYVISALYGFCSGSVFSLLPV) threads the bilayer. Residues 444-461 (CCGQISKTEEFGKRYSTM) are Cytoplasmic-facing. Residues 462–482 (YFVVGFGTLVGIPITGAIISI) form a helical membrane-spanning segment. The Extracellular portion of the chain corresponds to 483 to 487 (KTTAD). Residues 488–508 (YQHYIIFCGLATFVSAVCYII) form a helical membrane-spanning segment. Over 509-521 (SRAYCVGFKWVRF) the chain is Cytoplasmic.

It belongs to the major facilitator superfamily. Monocarboxylate porter (TC 2.A.1.13) family.

The protein localises to the cell membrane. Functionally, riboflavin transporter involved in riboflavin (vitamin B2) uptake. Does not act in the transport of monocarboxylic acids across the plasma membrane. The sequence is that of Riboflavin transporter MCH5 (MCH5) from Saccharomyces cerevisiae (strain ATCC 204508 / S288c) (Baker's yeast).